Reading from the N-terminus, the 292-residue chain is Elongation factor Ts (292 aa).

Residues 81–84 (TDFV) form an involved in Mg(2+) ion dislocation from EF-Tu region.

The protein belongs to the EF-Ts family.

It localises to the cytoplasm. Its function is as follows. Associates with the EF-Tu.GDP complex and induces the exchange of GDP to GTP. It remains bound to the aminoacyl-tRNA.EF-Tu.GTP complex up to the GTP hydrolysis stage on the ribosome. In Alkalilimnicola ehrlichii (strain ATCC BAA-1101 / DSM 17681 / MLHE-1), this protein is Elongation factor Ts.